The primary structure comprises 880 residues: DNA mismatch repair protein MutS (880 aa).

631–638 serves as a coordination point for ATP; that stretch reads GPNMAGKS. Residues 835 to 860 form a disordered region; the sequence is RAAPPPPAPAAPKTSPVEERLREIQP. Residues 850-860 show a composition bias toward basic and acidic residues; it reads PVEERLREIQP.

It belongs to the DNA mismatch repair MutS family.

Its function is as follows. This protein is involved in the repair of mismatches in DNA. It is possible that it carries out the mismatch recognition step. This protein has a weak ATPase activity. This is DNA mismatch repair protein MutS from Cereibacter sphaeroides (strain ATCC 17029 / ATH 2.4.9) (Rhodobacter sphaeroides).